An 83-amino-acid chain; its full sequence is MKTLLLTLVVVTIVCLDLGYTRRCFNQQSSEPQTNKSCPPGENSCYNKQWRDHRGTITERGCGCPQVKSGIKLTCCQSDDCNN.

The first 21 residues, methionine 1–threonine 21, serve as a signal peptide directing secretion. 4 cysteine pairs are disulfide-bonded: cysteine 24-cysteine 45, cysteine 38-cysteine 62, cysteine 64-cysteine 75, and cysteine 76-cysteine 81.

It belongs to the three-finger toxin family. Short-chain subfamily. Type I alpha-neurotoxin sub-subfamily. In terms of tissue distribution, expressed by the venom gland.

It localises to the secreted. Binds to muscle nicotinic acetylcholine receptor (nAChR) and inhibit acetylcholine from binding to the receptor, thereby impairing neuromuscular transmission. The protein is Short neurotoxin VAN-10 of Laticauda laticaudata (Blue-ringed sea krait).